We begin with the raw amino-acid sequence, 211 residues long: MNGVATKSALNLARSLYEAGIKNEGVLKALADTPREMFLDAALGHKAYENTALPIGQGQTISQPYIVARMTELLLENAPKRVLEIGTGSGYQAAILAKLVPELCTVERIKSLQIQARLRLKRLDLHNISFKYGDGWKGWANKGPFDSIMVTAAASTIPEALLTQLADKGVLVIPVGDESQQLLKVVRHGDTFSSEVVEMVRFVPLVNGELA.

The active site involves S62.

Belongs to the methyltransferase superfamily. L-isoaspartyl/D-aspartyl protein methyltransferase family.

The protein resides in the cytoplasm. The enzyme catalyses [protein]-L-isoaspartate + S-adenosyl-L-methionine = [protein]-L-isoaspartate alpha-methyl ester + S-adenosyl-L-homocysteine. In terms of biological role, catalyzes the methyl esterification of L-isoaspartyl residues in peptides and proteins that result from spontaneous decomposition of normal L-aspartyl and L-asparaginyl residues. It plays a role in the repair and/or degradation of damaged proteins. The chain is Protein-L-isoaspartate O-methyltransferase 1 from Shewanella sediminis (strain HAW-EB3).